We begin with the raw amino-acid sequence, 86 residues long: Large ribosomal subunit protein bL27 (86 aa).

A disordered region spans residues 1-23; that stretch reads MAHKKGTGSTRNGRDSNSKRLGV.

This sequence belongs to the bacterial ribosomal protein bL27 family.

This is Large ribosomal subunit protein bL27 from Prochlorococcus marinus (strain MIT 9515).